A 229-amino-acid chain; its full sequence is Aspartate-rich protein 1 (229 aa).

The interval 84 to 106 (SEEDNDDAKILPSPVQGSSEDNL) is disordered.

This is Aspartate-rich protein 1 (DRICH1) from Homo sapiens (Human).